Reading from the N-terminus, the 413-residue chain is 3-isopropylmalate dehydratase large subunit (413 aa).

[4Fe-4S] cluster contacts are provided by C293, C353, and C356.

The protein belongs to the aconitase/IPM isomerase family. LeuC type 2 subfamily. In terms of assembly, heterodimer of LeuC and LeuD. Requires [4Fe-4S] cluster as cofactor.

It carries out the reaction (2R,3S)-3-isopropylmalate = (2S)-2-isopropylmalate. It functions in the pathway amino-acid biosynthesis; L-leucine biosynthesis; L-leucine from 3-methyl-2-oxobutanoate: step 2/4. In terms of biological role, catalyzes the isomerization between 2-isopropylmalate and 3-isopropylmalate, via the formation of 2-isopropylmaleate. The chain is 3-isopropylmalate dehydratase large subunit from Picrophilus torridus (strain ATCC 700027 / DSM 9790 / JCM 10055 / NBRC 100828 / KAW 2/3).